We begin with the raw amino-acid sequence, 293 residues long: Ribosomal protein L11 methyltransferase (293 aa).

The S-adenosyl-L-methionine site is built by threonine 146, glycine 167, aspartate 189, and asparagine 230.

Belongs to the methyltransferase superfamily. PrmA family.

It localises to the cytoplasm. The enzyme catalyses L-lysyl-[protein] + 3 S-adenosyl-L-methionine = N(6),N(6),N(6)-trimethyl-L-lysyl-[protein] + 3 S-adenosyl-L-homocysteine + 3 H(+). Functionally, methylates ribosomal protein L11. The protein is Ribosomal protein L11 methyltransferase of Colwellia psychrerythraea (strain 34H / ATCC BAA-681) (Vibrio psychroerythus).